The following is a 203-amino-acid chain: Acid phosphatase (203 aa).

H13 (tele-phosphohistidine intermediate) is an active-site residue. E85 (proton donor/acceptor) is an active-site residue.

Belongs to the phosphoglycerate mutase family. Homodimer.

It carries out the reaction a phosphate monoester + H2O = an alcohol + phosphate. The enzyme catalyses beta-D-fructose 1,6-bisphosphate + H2O = beta-D-fructose 6-phosphate + phosphate. Its pathway is carbohydrate biosynthesis; gluconeogenesis. Its activity is regulated as follows. In contrast to classical FBPases, is resistant to inhibition by lithium. Functionally, phosphatase with a broad specificity. Can dephosphorylate a variety of substrates including phosphorylated sugars like fructose-6-phosphate (F6P). Is able to function in vivo as a fructose-1,6-bisphosphatase (FBPase) and to maintain gluconeogenesis when the classical FBPase GlpX is absent. Shows negligible phosphoglycerate mutase activity. Has no phosphatase activity against 3-phosphoglycerate, 2,3-bisphosphoglycerate, or hydrophobic substrates such as alpha-napthyl phosphate. In Mycobacterium tuberculosis (strain ATCC 25618 / H37Rv), this protein is Acid phosphatase.